Consider the following 579-residue polypeptide: Adenine deaminase (579 aa).

It belongs to the metallo-dependent hydrolases superfamily. Adenine deaminase family. Mn(2+) serves as cofactor.

It catalyses the reaction adenine + H2O + H(+) = hypoxanthine + NH4(+). This is Adenine deaminase from Listeria monocytogenes serotype 4b (strain F2365).